Consider the following 296-residue polypeptide: D-alanine--D-alanine ligase (296 aa).

One can recognise an ATP-grasp domain in the interval 103 to 293 (KEILMHHRMP…FDSFVKRIIE (191 aa)). Residue 129–180 (ISFPAAVKPSSGGSSIATFKVKSIQELKHAYEEASKYGEVMIEQWVTGKEIT) coordinates ATP. Residues Asp-247, Glu-260, and Asn-262 each contribute to the Mg(2+) site.

It belongs to the D-alanine--D-alanine ligase family. It depends on Mg(2+) as a cofactor. Mn(2+) is required as a cofactor.

The protein resides in the cytoplasm. It carries out the reaction 2 D-alanine + ATP = D-alanyl-D-alanine + ADP + phosphate + H(+). The protein operates within cell wall biogenesis; peptidoglycan biosynthesis. Its function is as follows. Cell wall formation. This chain is D-alanine--D-alanine ligase, found in Francisella tularensis subsp. holarctica (strain LVS).